The chain runs to 118 residues: Small ribosomal subunit protein uS13 (118 aa).

The tract at residues 93-118 (RSLPVRGQRSKTNARTRKGPRKPIKK) is disordered.

It belongs to the universal ribosomal protein uS13 family. As to quaternary structure, part of the 30S ribosomal subunit. Forms a loose heterodimer with protein S19. Forms two bridges to the 50S subunit in the 70S ribosome.

Functionally, located at the top of the head of the 30S subunit, it contacts several helices of the 16S rRNA. In the 70S ribosome it contacts the 23S rRNA (bridge B1a) and protein L5 of the 50S subunit (bridge B1b), connecting the 2 subunits; these bridges are implicated in subunit movement. Contacts the tRNAs in the A and P-sites. The protein is Small ribosomal subunit protein uS13 of Teredinibacter turnerae (strain ATCC 39867 / T7901).